A 351-amino-acid chain; its full sequence is 3-dehydroquinate synthase (351 aa).

NAD(+) contacts are provided by residues 60 to 65 (DGEEYK), 94 to 98 (GVISD), 118 to 119 (TT), Lys131, Lys140, and 158 to 161 (FLKT). Zn(2+) is bound by residues Glu173, His239, and His256.

Belongs to the sugar phosphate cyclases superfamily. Dehydroquinate synthase family. NAD(+) is required as a cofactor. Requires Co(2+) as cofactor. It depends on Zn(2+) as a cofactor.

The protein resides in the cytoplasm. It carries out the reaction 7-phospho-2-dehydro-3-deoxy-D-arabino-heptonate = 3-dehydroquinate + phosphate. It participates in metabolic intermediate biosynthesis; chorismate biosynthesis; chorismate from D-erythrose 4-phosphate and phosphoenolpyruvate: step 2/7. Its function is as follows. Catalyzes the conversion of 3-deoxy-D-arabino-heptulosonate 7-phosphate (DAHP) to dehydroquinate (DHQ). The chain is 3-dehydroquinate synthase from Campylobacter jejuni subsp. jejuni serotype O:2 (strain ATCC 700819 / NCTC 11168).